Here is an 892-residue protein sequence, read N- to C-terminus: Putative VWFA domain-containing protein ORF892 (892 aa).

Residues 109 to 548 (EEQLQRRPQR…RGYAHGDEDL (440 aa)) are disordered. Residues 129–142 (SEVANQRVSRSAEN) show a composition bias toward polar residues. The span at 143–162 (QGKRGNEEKQQQKTPGKTEE) shows a compositional bias: basic and acidic residues. The span at 169–184 (ESGEEGNQQEESGEEQ) shows a compositional bias: acidic residues. Basic and acidic residues predominate over residues 185–196 (EGVKGSRSKQRE). Positions 212-223 (ESGESESEEGQS) are enriched in acidic residues. 2 stretches are compositionally biased toward low complexity: residues 224–238 (SEET…GNQQ) and 271–283 (GNGQ…AQNG). Over residues 287-300 (GESEGEITESESAS) the composition is skewed to acidic residues. Residues 301 to 323 (EEQTGSKGKSGQQGEEGQQQSGS) show a composition bias toward low complexity. 2 stretches are compositionally biased toward acidic residues: residues 324–336 (EGEE…ESGE) and 425–448 (SESE…ETEE). Positions 453–466 (SEAEGTAAEGEVGQ) are enriched in low complexity. 2 stretches are compositionally biased toward polar residues: residues 467–481 (PSEQ…SGQR) and 512–531 (QTGS…QQGE). A compositionally biased stretch (basic and acidic residues) spans 536–546 (EGGRGYAHGDE). Residues 553-620 (QEINSILQTL…VQKLLKDLNV (68 aa)) are a coiled coil. Residues 723–892 (DFLFVIDSSG…GNIVLKRLVH (170 aa)) enclose the VWFA domain.

In Acidianus two-tailed virus (ATV), this protein is Putative VWFA domain-containing protein ORF892.